The following is an 824-amino-acid chain: Type IV secretion system protein PtlC homolog (824 aa).

456 to 463 (GQSGSGKT) contributes to the ATP binding site.

This sequence belongs to the TrbE/VirB4 family.

Its subcellular location is the cell membrane. This Bordetella bronchiseptica (strain ATCC BAA-588 / NCTC 13252 / RB50) (Alcaligenes bronchisepticus) protein is Type IV secretion system protein PtlC homolog (ptlC).